The primary structure comprises 946 residues: Inter-alpha-trypsin inhibitor heavy chain H2 (946 aa).

An N-terminal signal peptide occupies residues 1-18 (MQRLACVLIWLFLLEEQA). The propeptide occupies 19-54 (FEIPANEYSEFAGYSNLVELAPDKFPFVQENRRYQR). Positions 56–185 (LPEESGEMTD…KVQFELHYQE (130 aa)) constitute a VIT domain. Ser-60 is modified (phosphoserine). Asn-118 and Asn-263 each carry an N-linked (GlcNAc...) asparagine glycan. Glu-282 and Glu-283 each carry 4-carboxyglutamate. In terms of domain architecture, VWFA spans 308 to 468 (PKNILFVIDV…YDFLKRLSNE (161 aa)). Asn-445 carries N-linked (GlcNAc...) asparagine glycosylation. Ser-466 carries the phosphoserine modification. A glycan (N-linked (GlcNAc...) asparagine) is linked at Asn-578. Asp-702 carries the post-translational modification Aspartate 1-(chondroitin 4-sulfate)-ester. The propeptide occupies 703–946 (PHFIIYLPKS…PQLYSFLKRP (244 aa)). Ser-886 bears the Phosphoserine mark.

It belongs to the ITIH family. I-alpha-I plasma protease inhibitors are assembled from one or two heavy chains (HC) and one light chain, bikunin. Inter-alpha-inhibitor (I-alpha-I) is composed of ITIH1/HC1, ITIH2/HC2 and bikunin. In terms of processing, heavy chains are linked to bikunin via chondroitin 4-sulfate esterified to the alpha-carboxyl of the C-terminal aspartate after propeptide cleavage. Phosphorylated by FAM20C in the extracellular medium.

Its subcellular location is the secreted. May act as a carrier of hyaluronan in serum or as a binding protein between hyaluronan and other matrix protein, including those on cell surfaces in tissues to regulate the localization, synthesis and degradation of hyaluronan which are essential to cells undergoing biological processes. This Mesocricetus auratus (Golden hamster) protein is Inter-alpha-trypsin inhibitor heavy chain H2 (ITIH2).